Consider the following 350-residue polypeptide: 4-hydroxy-2-oxovalerate aldolase 3 (350 aa).

One can recognise a Pyruvate carboxyltransferase domain in the interval 13-265 (VVFHDMCLRD…DTGVDLFRLM (253 aa)). 21 to 22 (RD) lines the substrate pocket. A Mn(2+)-binding site is contributed by D22. H25 acts as the Proton acceptor in catalysis. Substrate contacts are provided by S175 and H204. H204 and H206 together coordinate Mn(2+). Substrate is bound at residue Y295.

Belongs to the 4-hydroxy-2-oxovalerate aldolase family.

It catalyses the reaction (S)-4-hydroxy-2-oxopentanoate = acetaldehyde + pyruvate. This is 4-hydroxy-2-oxovalerate aldolase 3 (lapG) from Azotobacter vinelandii (strain DJ / ATCC BAA-1303).